The sequence spans 246 residues: RNA polymerase sigma-B factor (246 aa).

The Polymerase core binding motif lies at 25-38; it reads DLIQEGNIGLMKAV. The H-T-H motif DNA-binding region spans 201–220; it reads LKELGEHFGFSRERARQLEI.

It belongs to the sigma-70 factor family.

Sigma factors are initiation factors that promote the attachment of RNA polymerase to specific initiation sites and are then released. This sigma factor is essential for late-stage differentiation of M.xanthus. In Myxococcus xanthus, this protein is RNA polymerase sigma-B factor (sigB).